The following is an 80-amino-acid chain: Putative membrane protein insertion efficiency factor (80 aa).

It belongs to the UPF0161 family.

It is found in the cell inner membrane. Its function is as follows. Could be involved in insertion of integral membrane proteins into the membrane. This Picosynechococcus sp. (strain ATCC 27264 / PCC 7002 / PR-6) (Agmenellum quadruplicatum) protein is Putative membrane protein insertion efficiency factor.